The following is a 208-amino-acid chain: NAD(P)H-quinone oxidoreductase subunit I (208 aa).

2 4Fe-4S ferredoxin-type domains span residues 55 to 84 (GRIH…VDWV) and 95 to 124 (RNYS…MTEE). Residues C64, C67, C70, C74, C104, C107, C110, and C114 each contribute to the [4Fe-4S] cluster site.

It belongs to the complex I 23 kDa subunit family. In terms of assembly, NDH-1 is composed of at least 11 different subunits. The cofactor is [4Fe-4S] cluster.

It localises to the cellular thylakoid membrane. The catalysed reaction is a plastoquinone + NADH + (n+1) H(+)(in) = a plastoquinol + NAD(+) + n H(+)(out). It catalyses the reaction a plastoquinone + NADPH + (n+1) H(+)(in) = a plastoquinol + NADP(+) + n H(+)(out). In terms of biological role, NDH-1 shuttles electrons from an unknown electron donor, via FMN and iron-sulfur (Fe-S) centers, to quinones in the respiratory and/or the photosynthetic chain. The immediate electron acceptor for the enzyme in this species is believed to be plastoquinone. Couples the redox reaction to proton translocation, and thus conserves the redox energy in a proton gradient. This chain is NAD(P)H-quinone oxidoreductase subunit I, found in Prochlorococcus marinus (strain MIT 9515).